Reading from the N-terminus, the 191-residue chain is FMN reductase (NADH) RutF (191 aa).

Belongs to the non-flavoprotein flavin reductase family. RutF subfamily.

It catalyses the reaction FMNH2 + NAD(+) = FMN + NADH + 2 H(+). Catalyzes the reduction of FMN to FMNH2 which is used to reduce pyrimidine by RutA via the Rut pathway. This Escherichia coli O1:K1 / APEC protein is FMN reductase (NADH) RutF.